The chain runs to 188 residues: Protein TIFY 9 (188 aa).

Residues 20-41 (DADDRHAKSGGSSASSSSSIRG) form a disordered region. Positions 28 to 38 (SGGSSASSSSS) are enriched in low complexity. Residues 80-114 (AAAAAAPMTLFYNGSVAVFDVSHDKAEAIMRMATE) form the Tify domain. The Jas motif lies at 135–160 (PLTRTKSLQRFLSKRKERLTSLGPYQ). The disordered stretch occupies residues 156–188 (LGPYQVGGPAAVGATTSTTTKSFLAKEEEHTAS). Positions 179-188 (LAKEEEHTAS) are enriched in basic and acidic residues.

It belongs to the TIFY/JAZ family. In terms of assembly, interacts with COI1A and COI2 in a coronatine-dependent manner. Coronatine is an analog of jasmonoyl isoleucine (JA-Ile). In terms of processing, ubiquitinated. Targeted for degradation by the SCF(COI1) E3 ubiquitin ligase-proteasome pathway during jasmonate signaling.

Repressor of jasmonate responses. The polypeptide is Protein TIFY 9 (Oryza sativa subsp. japonica (Rice)).